Reading from the N-terminus, the 94-residue chain is Mobilization protein C (94 aa).

Interacts with MobA and MobB to form the relaxosome.

In terms of biological role, this protein is essential to promote the specific transfer of the plasmid in the presence of conjugative plasmids. The sequence is that of Mobilization protein C (mobC) from Escherichia coli.